The following is a 332-amino-acid chain: Cell growth regulator with RING finger domain protein 1 (332 aa).

The RING-type zinc-finger motif lies at 274–309 (CVVCQNGTVNWVLLPCRHTCLCDGCVKYFQQCPMCR).

Ubiquitously expressed with high expression in testis and the cerebellum.

The protein resides in the nucleus. It localises to the endoplasmic reticulum. Functionally, able to inhibit growth in several cell lines. The chain is Cell growth regulator with RING finger domain protein 1 (CGRRF1) from Homo sapiens (Human).